The chain runs to 360 residues: Phospho-N-acetylmuramoyl-pentapeptide-transferase (360 aa).

10 helical membrane passes run 26-46, 72-92, 94-114, 132-152, 168-188, 199-219, 236-256, 263-283, 288-308, and 338-358; these read AIVSLLTALFISLWMGPRLIA, PTMGGIMILTSIVVSVLLWAY, SNPYVWCVLFVLVGYGAVGFV, WKYFWMSLIALTVAFALYITG, VMPQLGIFYVLLAYFVIVGTG, GLAIMPTVLVAGGFALVAWAT, AGELVIVCTAIVGAGLGFLWF, VFMGDVGSLALGGALGIIAVL, FLLVIMGGVFVVETLSVILQV, and VIVRFWVISLMLVLIGLATLK.

The protein belongs to the glycosyltransferase 4 family. MraY subfamily. The cofactor is Mg(2+).

It localises to the cell inner membrane. The catalysed reaction is UDP-N-acetyl-alpha-D-muramoyl-L-alanyl-gamma-D-glutamyl-meso-2,6-diaminopimeloyl-D-alanyl-D-alanine + di-trans,octa-cis-undecaprenyl phosphate = di-trans,octa-cis-undecaprenyl diphospho-N-acetyl-alpha-D-muramoyl-L-alanyl-D-glutamyl-meso-2,6-diaminopimeloyl-D-alanyl-D-alanine + UMP. It participates in cell wall biogenesis; peptidoglycan biosynthesis. Functionally, catalyzes the initial step of the lipid cycle reactions in the biosynthesis of the cell wall peptidoglycan: transfers peptidoglycan precursor phospho-MurNAc-pentapeptide from UDP-MurNAc-pentapeptide onto the lipid carrier undecaprenyl phosphate, yielding undecaprenyl-pyrophosphoryl-MurNAc-pentapeptide, known as lipid I. The polypeptide is Phospho-N-acetylmuramoyl-pentapeptide-transferase (Cronobacter sakazakii (strain ATCC BAA-894) (Enterobacter sakazakii)).